A 358-amino-acid polypeptide reads, in one-letter code: Chorismate synthase (358 aa).

Arg46 contributes to the NADP(+) binding site. Residues Arg123–Ser125, Asn235–Ala236, Gly275, Lys290–Ser294, and Arg316 contribute to the FMN site.

This sequence belongs to the chorismate synthase family. As to quaternary structure, homotetramer. Requires FMNH2 as cofactor.

The catalysed reaction is 5-O-(1-carboxyvinyl)-3-phosphoshikimate = chorismate + phosphate. It participates in metabolic intermediate biosynthesis; chorismate biosynthesis; chorismate from D-erythrose 4-phosphate and phosphoenolpyruvate: step 7/7. In terms of biological role, catalyzes the anti-1,4-elimination of the C-3 phosphate and the C-6 proR hydrogen from 5-enolpyruvylshikimate-3-phosphate (EPSP) to yield chorismate, which is the branch point compound that serves as the starting substrate for the three terminal pathways of aromatic amino acid biosynthesis. This reaction introduces a second double bond into the aromatic ring system. In Aliarcobacter butzleri (strain RM4018) (Arcobacter butzleri), this protein is Chorismate synthase.